The primary structure comprises 59 residues: UPF0434 protein Shewmr7_2490 (59 aa).

This sequence belongs to the UPF0434 family.

This Shewanella sp. (strain MR-7) protein is UPF0434 protein Shewmr7_2490.